The primary structure comprises 445 residues: Trigger factor (445 aa).

Positions 162-247 constitute a PPIase FKBP-type domain; it reads GDQVTIDAIG…IKAVHTAEPT (86 aa).

The protein belongs to the FKBP-type PPIase family. Tig subfamily.

Its subcellular location is the cytoplasm. The enzyme catalyses [protein]-peptidylproline (omega=180) = [protein]-peptidylproline (omega=0). Involved in protein export. Acts as a chaperone by maintaining the newly synthesized protein in an open conformation. Functions as a peptidyl-prolyl cis-trans isomerase. The chain is Trigger factor from Rickettsia conorii (strain ATCC VR-613 / Malish 7).